A 171-amino-acid chain; its full sequence is Protein-export protein SecB (171 aa).

The protein belongs to the SecB family. As to quaternary structure, homotetramer, a dimer of dimers. One homotetramer interacts with 1 SecA dimer.

The protein localises to the cytoplasm. Its function is as follows. One of the proteins required for the normal export of preproteins out of the cell cytoplasm. It is a molecular chaperone that binds to a subset of precursor proteins, maintaining them in a translocation-competent state. It also specifically binds to its receptor SecA. In Jannaschia sp. (strain CCS1), this protein is Protein-export protein SecB.